A 586-amino-acid polypeptide reads, in one-letter code: NADH-quinone oxidoreductase subunit C/D 2 (586 aa).

The NADH dehydrogenase I subunit C stretch occupies residues 1–173; that stretch reads MKWVNKGTVE…RTDPPSHDFE (173 aa). An NADH dehydrogenase I subunit D region spans residues 197–586; it reads AELVLNWGPL…LDPVVGETDR (390 aa).

In the N-terminal section; belongs to the complex I 30 kDa subunit family. The protein in the C-terminal section; belongs to the complex I 49 kDa subunit family. NDH-1 is composed of 13 different subunits. Subunits NuoB, CD, E, F, and G constitute the peripheral sector of the complex.

The protein localises to the cell inner membrane. The catalysed reaction is a quinone + NADH + 5 H(+)(in) = a quinol + NAD(+) + 4 H(+)(out). Functionally, NDH-1 shuttles electrons from NADH, via FMN and iron-sulfur (Fe-S) centers, to quinones in the respiratory chain. The immediate electron acceptor for the enzyme in this species is believed to be ubiquinone. Couples the redox reaction to proton translocation (for every two electrons transferred, four hydrogen ions are translocated across the cytoplasmic membrane), and thus conserves the redox energy in a proton gradient. The polypeptide is NADH-quinone oxidoreductase subunit C/D 2 (nuoC2) (Aquifex aeolicus (strain VF5)).